The primary structure comprises 124 residues: Small ribosomal subunit protein bS6 (124 aa).

Residues 96 to 124 are disordered; it reads ETAPSPMMKEVQREEARKAAQTTTEGQAA. A compositionally biased stretch (polar residues) spans 115–124; it reads AQTTTEGQAA.

This sequence belongs to the bacterial ribosomal protein bS6 family.

In terms of biological role, binds together with bS18 to 16S ribosomal RNA. The protein is Small ribosomal subunit protein bS6 of Cupriavidus necator (strain ATCC 17699 / DSM 428 / KCTC 22496 / NCIMB 10442 / H16 / Stanier 337) (Ralstonia eutropha).